The primary structure comprises 498 residues: Death-associated inhibitor of apoptosis 2 (498 aa).

BIR repeat units follow at residues 12-77 (RLAT…SMVL), 116-180 (RLVT…PRVQ), and 215-280 (RLRT…QFVL). Residues Cys-249, Cys-252, His-269, and Cys-276 each contribute to the Zn(2+) site. An RING-type zinc finger spans residues 451–486 (CKVCLDEEVGVVFLPCGHLATCNQCAPSVANCPMCR).

It belongs to the IAP family. Interacts with the caspase Strica. Interacts (via BIR2 domain) with rpr and grim. Interacts (via the BIR2 and BIR3 domains) with hid. Interacts (via BIR3 domain) with Drice. Interacts with Dredd; likely to bind Dredd simultaneously with Fadd to form a trimeric complex. Caspase-dependent cleavage is required for suppression of Drice-mediated cell death. As to expression, expressed in both principal and stellar cells of the Malphigian tubules.

It is found in the nucleus. Its subcellular location is the cytoplasm. Functionally, required for activation of NF-kappaB transcription factors in the immune deficiency (Imd) signaling cascade which is essential for innate immune responses upon infection by Gram-negative bacteria. Promotes cytoplasmic cleavage of Rel and its translocation to the nucleus where it drives expression of antimicrobial peptides. Binds, polyubiquitinates and activates Dredd which is required for Rel-mediated induction of antimicrobial peptides. Anti-apoptotic protein which binds, ubiquitinates and inactivates the effector caspase Drice. Suppresses rpr and hid-dependent cell death in the eye. However, has also been shown to have little, if any, role in the regulation of the canonical caspase-dependent apoptosis pathway. Plays a role in regulating the expression of ion channels. This is Death-associated inhibitor of apoptosis 2 (Diap2) from Drosophila melanogaster (Fruit fly).